We begin with the raw amino-acid sequence, 261 residues long: Ethanolamine ammonia-lyase small subunit (261 aa).

Adenosylcob(III)alamin-binding residues include Val-158, Glu-179, and Cys-208.

Belongs to the EutC family. As to quaternary structure, the basic unit is a heterodimer which dimerizes to form tetramers. The heterotetramers trimerize; 6 large subunits form a core ring with 6 small subunits projecting outwards. Adenosylcob(III)alamin is required as a cofactor.

The protein resides in the bacterial microcompartment. The enzyme catalyses ethanolamine = acetaldehyde + NH4(+). It functions in the pathway amine and polyamine degradation; ethanolamine degradation. Catalyzes the deamination of various vicinal amino-alcohols to oxo compounds. Allows this organism to utilize ethanolamine as the sole source of nitrogen and carbon in the presence of external vitamin B12. This chain is Ethanolamine ammonia-lyase small subunit, found in Bradyrhizobium diazoefficiens (strain JCM 10833 / BCRC 13528 / IAM 13628 / NBRC 14792 / USDA 110).